We begin with the raw amino-acid sequence, 213 residues long: MKNKIDYSIYLVTDRDLMSTNTLEEAVEKSILGGTTLVQLREKECSSHDFYETALNVKKITQKYNIPLIINDRVDIALAVDADGIHIGQSDLPATVVRNIIGEDKILGVSAGNLDEALKAQKDGADYIGVGAMYSTGTKKDATSTTMNELREIMKKVSIPVVVIGGINKERIKDFNGINIDGLAIVSAIIAQENIEKSTRELKEEFDKLNTLI.

4-amino-2-methyl-5-(diphosphooxymethyl)pyrimidine contacts are provided by residues 39 to 43 (QLREK) and Asn-71. 2 residues coordinate Mg(2+): Asp-72 and Asp-91. 4-amino-2-methyl-5-(diphosphooxymethyl)pyrimidine is bound at residue Ser-110. 136–138 (TGT) is a binding site for 2-[(2R,5Z)-2-carboxy-4-methylthiazol-5(2H)-ylidene]ethyl phosphate. Residue Lys-139 participates in 4-amino-2-methyl-5-(diphosphooxymethyl)pyrimidine binding. 2-[(2R,5Z)-2-carboxy-4-methylthiazol-5(2H)-ylidene]ethyl phosphate contacts are provided by residues Gly-166 and 186–187 (VS).

It belongs to the thiamine-phosphate synthase family. Requires Mg(2+) as cofactor.

It catalyses the reaction 2-[(2R,5Z)-2-carboxy-4-methylthiazol-5(2H)-ylidene]ethyl phosphate + 4-amino-2-methyl-5-(diphosphooxymethyl)pyrimidine + 2 H(+) = thiamine phosphate + CO2 + diphosphate. The catalysed reaction is 2-(2-carboxy-4-methylthiazol-5-yl)ethyl phosphate + 4-amino-2-methyl-5-(diphosphooxymethyl)pyrimidine + 2 H(+) = thiamine phosphate + CO2 + diphosphate. It carries out the reaction 4-methyl-5-(2-phosphooxyethyl)-thiazole + 4-amino-2-methyl-5-(diphosphooxymethyl)pyrimidine + H(+) = thiamine phosphate + diphosphate. The protein operates within cofactor biosynthesis; thiamine diphosphate biosynthesis; thiamine phosphate from 4-amino-2-methyl-5-diphosphomethylpyrimidine and 4-methyl-5-(2-phosphoethyl)-thiazole: step 1/1. Condenses 4-methyl-5-(beta-hydroxyethyl)thiazole monophosphate (THZ-P) and 2-methyl-4-amino-5-hydroxymethyl pyrimidine pyrophosphate (HMP-PP) to form thiamine monophosphate (TMP). This chain is Thiamine-phosphate synthase, found in Clostridium botulinum (strain Eklund 17B / Type B).